Consider the following 408-residue polypeptide: Zinc finger and SCAN domain-containing protein 1 (408 aa).

The segment at 1–34 (MLPRPKAPASPRRPQTPTPSEQDADPGPASPRDT) is disordered. The SCAN box domain maps to 38–120 (RLRFRQFQYH…SLVEDLTQMC (83 aa)). 3 disordered regions span residues 136–155 (WSFG…EPSQ), 177–203 (LETT…LLGS), and 215–273 (DEPE…GGTQ). Polar residues predominate over residues 177-187 (LETTQLQQSLH). 2 consecutive C2H2-type zinc fingers follow at residues 292-314 (FQCA…QKTH) and 320-342 (FPCP…GKIH). The segment at 344–379 (LEPPRKKAPRSKGPRESVPPRDGAQGPVAPRSPKRP) is disordered. The segment at 380–402 (FQCSVCGKAFPWMVHLIDHQKLH) adopts a C2H2-type 3 zinc-finger fold.

It localises to the nucleus. Its function is as follows. May be involved in transcriptional regulation. The sequence is that of Zinc finger and SCAN domain-containing protein 1 (ZSCAN1) from Homo sapiens (Human).